The following is a 188-amino-acid chain: Probable chemoreceptor glutamine deamidase CheD (188 aa).

The protein belongs to the CheD family.

The catalysed reaction is L-glutaminyl-[protein] + H2O = L-glutamyl-[protein] + NH4(+). Its function is as follows. Probably deamidates glutamine residues to glutamate on methyl-accepting chemotaxis receptors (MCPs), playing an important role in chemotaxis. The sequence is that of Probable chemoreceptor glutamine deamidase CheD from Caulobacter sp. (strain K31).